We begin with the raw amino-acid sequence, 114 residues long: Nucleoid-associated protein Amet_4780 (114 aa).

Residues 23–42 (QKMQKDMEKTQAALEEKEVE) form a disordered region. Residues 25–42 (MQKDMEKTQAALEEKEVE) show a composition bias toward basic and acidic residues.

Belongs to the YbaB/EbfC family. Homodimer.

It is found in the cytoplasm. The protein resides in the nucleoid. Binds to DNA and alters its conformation. May be involved in regulation of gene expression, nucleoid organization and DNA protection. The sequence is that of Nucleoid-associated protein Amet_4780 from Alkaliphilus metalliredigens (strain QYMF).